The primary structure comprises 453 residues: Gamma-aminobutyric acid receptor subunit alpha-6 (453 aa).

An N-terminal signal peptide occupies residues 1-19 (MVLLLPWLFIILWLENAQA). Topologically, residues 20 to 243 (QLEDEGNFYS…FHLQRKMGYF (224 aa)) are extracellular. Asn-31 carries an N-linked (GlcNAc...) asparagine glycan. Position 84 (Arg-84) interacts with 4-aminobutanoate. 2 N-linked (GlcNAc...) asparagine glycosylation sites follow: Asn-128 and Asn-141. Residue Thr-147 coordinates 4-aminobutanoate. Cys-156 and Cys-170 are oxidised to a cystine. Residues 244–264 (MIQIYTPCIMTVILSQVSFWI) traverse the membrane as a helical segment. The Cytoplasmic segment spans residues 265–270 (NKESVP). Residues 271 to 290 (ARTVFGITTVLTMTTLSISA) traverse the membrane as a helical segment. The Extracellular segment spans residues 291-304 (RHSLPKVSYATAMD). Residues 305-325 (WFIAVCFAFVFSALIEFAAVN) form a helical membrane-spanning segment. Topologically, residues 326–422 (YFTNLQSQKA…GTSKIDQYSR (97 aa)) are cytoplasmic. A Phosphoserine modification is found at Ser-375. Residues 423–443 (ILFPVAFAGFNLVYWIVYLSK) traverse the membrane as a helical segment. Over 444–453 (DTMEVSSTVE) the chain is Extracellular.

The protein belongs to the ligand-gated ion channel (TC 1.A.9) family. Gamma-aminobutyric acid receptor (TC 1.A.9.5) subfamily. GABRA6 sub-subfamily. In terms of assembly, heteropentamer, formed by a combination of alpha (GABRA1-6), beta (GABRB1-3), gamma (GABRG1-3), delta (GABRD), epsilon (GABRE), rho (GABRR1-3), pi (GABRP) and theta (GABRQ) chains, each subunit exhibiting distinct physiological and pharmacological properties. Binds UBQLN1. As to expression, expressed in brain, in cerebellar granule cells.

The protein resides in the postsynaptic cell membrane. It localises to the cell membrane. The catalysed reaction is chloride(in) = chloride(out). Functionally, alpha subunit of the heteropentameric ligand-gated chloride channel gated by gamma-aminobutyric acid (GABA), a major inhibitory neurotransmitter in the brain. GABA-gated chloride channels, also named GABA(A) receptors (GABAAR), consist of five subunits arranged around a central pore and contain GABA active binding site(s) located at the alpha and beta subunit interface(s). When activated by GABA, GABAARs selectively allow the flow of chloride anions across the cell membrane down their electrochemical gradient. Alpha-6/GABRA6 subunits are found at both synaptic and extrasynaptic sites. Chloride influx into the postsynaptic neuron following GABAAR opening decreases the neuron ability to generate a new action potential, thereby reducing nerve transmission. Extrasynaptic alpha-6-containing receptors contribute to the tonic GABAergic inhibition. Alpha-6 subunits are also present on glutamatergic synapses. The protein is Gamma-aminobutyric acid receptor subunit alpha-6 of Mus musculus (Mouse).